A 700-amino-acid polypeptide reads, in one-letter code: Elongation factor G (700 aa).

The region spanning His-6 to Leu-286 is the tr-type G domain. Residues Ala-15–Thr-22, Asp-79–His-83, and Asn-133–Asp-136 contribute to the GTP site.

This sequence belongs to the TRAFAC class translation factor GTPase superfamily. Classic translation factor GTPase family. EF-G/EF-2 subfamily.

It is found in the cytoplasm. Functionally, catalyzes the GTP-dependent ribosomal translocation step during translation elongation. During this step, the ribosome changes from the pre-translocational (PRE) to the post-translocational (POST) state as the newly formed A-site-bound peptidyl-tRNA and P-site-bound deacylated tRNA move to the P and E sites, respectively. Catalyzes the coordinated movement of the two tRNA molecules, the mRNA and conformational changes in the ribosome. In Leifsonia xyli subsp. xyli (strain CTCB07), this protein is Elongation factor G.